The primary structure comprises 327 residues: Serine/threonine-protein phosphatase PP1-beta catalytic subunit (327 aa).

Residue Ala-2 is modified to N-acetylalanine. Mn(2+) is bound by residues Asp-63, His-65, Asp-91, and Asn-123. The active-site Proton donor is the His-124. His-172 and His-247 together coordinate Mn(2+). The interval 305–327 is disordered; the sequence is QYGGLNSGRPVTPPRTANPPKKR. A Phosphothreonine modification is found at Thr-316.

Belongs to the PPP phosphatase family. PP-1 subfamily. PP1 comprises a catalytic subunit, PPP1CA, PPP1CB or PPP1CC, which is folded into its native form by inhibitor 2 and glycogen synthetase kinase 3, and then complexed to one or several targeting or regulatory subunits. The targeting or regulatory subunits determine the substrate specificity of PP1. PPP1R12A, PPP1R12B and PPP1R12C mediate binding to myosin. PPP1R3A (in skeletal muscle), PPP1R3B (in liver), PPP1R3C, PPP1R3D and PPP1R3F (in brain) mediate binding to glycogen. PPP1R15A and PPP1R15B mediate binding to EIF2S1. Part of a complex containing PPP1R15B, PP1 and NCK1/2. Interacts with PPP1R7 and PPP1R12C. Interacts with PPP1R16B. Component of the PTW/PP1 phosphatase complex, composed of PPP1R10/PNUTS, TOX4, WDR82, and PPP1CA or PPP1CB or PPP1CC. Interacts with PPP1R8. Interacts with PPP1R12A and NUAK1; the interaction is direct. Interacts with TRIM28; the interaction is weak. Interacts with FOXP3. Interacts with RRP1B. Interacts with SERPINE1. Interacts with LZTR1. Component of the SHOC2-MRAS-PP1c (SMP) complex consisting of SHOC2, GTP-bound M-Ras/MRAS and the catalytic subunit of protein phosphatase 1 (either PPP1CA, PPP1CB or PPP1CC). SHOC2 and PP1c preferably bind M-Ras/MRAS, but they also bind K-Ras/KRAS, N-Ras/NRAS and H-Ras/HRAS; these interactions are GTP-dependent and both SHOC2 and PP1c are required to form a stable complex. Interacts with SHOC2 in the absence of Ras GTPases. Requires Mn(2+) as cofactor.

It localises to the cytoplasm. The protein resides in the nucleus. The protein localises to the nucleoplasm. Its subcellular location is the nucleolus. The enzyme catalyses O-phospho-L-seryl-[protein] + H2O = L-seryl-[protein] + phosphate. It carries out the reaction O-phospho-L-threonyl-[protein] + H2O = L-threonyl-[protein] + phosphate. The catalysed reaction is O-phospho-L-seryl-[myosin light chain] + H2O = L-seryl-[myosin light chain] + phosphate. It catalyses the reaction O-phospho-L-threonyl-[myosin light chain] + H2O = L-threonyl-[myosin light chain] + phosphate. Inhibited by the toxins okadaic acid, tautomycin and microcystin Leu-Arg. The phosphatase activity of the PPP1R15A-PP1 complex toward EIF2S1 is specifically inhibited by Salubrinal, a drug that protects cells from endoplasmic reticulum stress. Its function is as follows. Protein phosphatase that associates with over 200 regulatory proteins to form highly specific holoenzymes which dephosphorylate hundreds of biological targets. Protein phosphatase (PP1) is essential for cell division, it participates in the regulation of glycogen metabolism, muscle contractility and protein synthesis. Involved in regulation of ionic conductances and long-term synaptic plasticity. Component of the PTW/PP1 phosphatase complex, which plays a role in the control of chromatin structure and cell cycle progression during the transition from mitosis into interphase. In balance with CSNK1D and CSNK1E, determines the circadian period length, through the regulation of the speed and rhythmicity of PER1 and PER2 phosphorylation. May dephosphorylate CSNK1D and CSNK1E. Core component of the SHOC2-MRAS-PP1c (SMP) holophosphatase complex that regulates the MAPK pathway activation. The SMP complex specifically dephosphorylates the inhibitory phosphorylation at 'Ser-259' of RAF1 kinase, 'Ser-365' of BRAF kinase and 'Ser-214' of ARAF kinase, stimulating their kinase activities. The SMP complex enhances the dephosphorylation activity and substrate specificity of PP1c. This is Serine/threonine-protein phosphatase PP1-beta catalytic subunit (PPP1CB) from Bos taurus (Bovine).